The sequence spans 232 residues: Alpha N-terminal protein methyltransferase 1 (232 aa).

Residues Gly71, Arg76, 123–124 (MQ), and Gln139 contribute to the S-adenosyl-L-methionine site.

The protein belongs to the methyltransferase superfamily. NTM1 family.

The protein localises to the cytoplasm. It carries out the reaction N-terminal L-alanyl-L-prolyl-L-lysyl-[protein] + 3 S-adenosyl-L-methionine = N-terminal N,N,N-trimethyl-L-alanyl-L-prolyl-L-lysyl-[protein] + 3 S-adenosyl-L-homocysteine + 3 H(+). It catalyses the reaction N-terminal L-seryl-L-prolyl-L-lysyl-[protein] + 3 S-adenosyl-L-methionine = N-terminal N,N,N-trimethyl-L-seryl-L-prolyl-L-lysyl-[protein] + 3 S-adenosyl-L-homocysteine + 3 H(+). The enzyme catalyses N-terminal L-prolyl-L-prolyl-L-lysyl-[protein] + 2 S-adenosyl-L-methionine = N-terminal N,N-dimethyl-L-prolyl-L-prolyl-L-lysyl-[protein] + 2 S-adenosyl-L-homocysteine + 2 H(+). Functionally, alpha-N-methyltransferase that methylates the N-terminus of target proteins containing the N-terminal motif [Ala/Pro/Ser]-Pro-Lys when the initiator Met is cleaved. Specifically catalyzes mono-, di- or tri-methylation of exposed alpha-amino group of Ala or Ser residue in the [Ala/Ser]-Pro-Lys motif and mono- or di-methylation of Pro in the Pro-Pro-Lys motif. Responsible for the N-terminal methylation of the ribosomal proteins RPL12A, RPL12B, RPS25A and RPS25B. This chain is Alpha N-terminal protein methyltransferase 1 (TAE1), found in Saccharomyces cerevisiae (strain ATCC 204508 / S288c) (Baker's yeast).